The primary structure comprises 224 residues: Inner membrane-spanning protein YciB (224 aa).

6 helical membrane-spanning segments follow: residues 20–40 (GVNP…FFFA), 61–81 (IFVA…ASWL), 86–106 (LPIM…LTLY), 123–143 (LFGG…GYVF), 156–176 (KLTF…EVVW), and 187–207 (FKVW…MPLI).

Belongs to the YciB family.

The protein localises to the cell inner membrane. In terms of biological role, plays a role in cell envelope biogenesis, maintenance of cell envelope integrity and membrane homeostasis. This chain is Inner membrane-spanning protein YciB, found in Mesorhizobium japonicum (strain LMG 29417 / CECT 9101 / MAFF 303099) (Mesorhizobium loti (strain MAFF 303099)).